Here is a 122-residue protein sequence, read N- to C-terminus: Large ribosomal subunit protein uL14 (122 aa).

It belongs to the universal ribosomal protein uL14 family. Part of the 50S ribosomal subunit. Forms a cluster with proteins L3 and L19. In the 70S ribosome, L14 and L19 interact and together make contacts with the 16S rRNA in bridges B5 and B8.

In terms of biological role, binds to 23S rRNA. Forms part of two intersubunit bridges in the 70S ribosome. The sequence is that of Large ribosomal subunit protein uL14 from Moorella thermoacetica (strain ATCC 39073 / JCM 9320).